The chain runs to 183 residues: Adenine phosphoribosyltransferase (183 aa).

The protein belongs to the purine/pyrimidine phosphoribosyltransferase family. In terms of assembly, homodimer.

It localises to the cytoplasm. It carries out the reaction AMP + diphosphate = 5-phospho-alpha-D-ribose 1-diphosphate + adenine. Its pathway is purine metabolism; AMP biosynthesis via salvage pathway; AMP from adenine: step 1/1. Its function is as follows. Catalyzes a salvage reaction resulting in the formation of AMP, that is energically less costly than de novo synthesis. This is Adenine phosphoribosyltransferase from Shewanella piezotolerans (strain WP3 / JCM 13877).